Reading from the N-terminus, the 109-residue chain is Probable guanidinium efflux system subunit GdnC (109 aa).

Transmembrane regions (helical) follow at residues Trp3 to Ala23, Ala26 to Ala46, Val55 to Phe75, and Ile81 to Thr101.

Belongs to the drug/metabolite transporter (DMT) superfamily. Small multidrug resistance (SMR) (TC 2.A.7.1) family. YkkC/YkkD subfamily. As to quaternary structure, the efflux pump is composed of GdnC and GdnD.

It localises to the cell membrane. Its function is as follows. Probably involved in guanidinium transport. This Bacillus licheniformis (strain ATCC 14580 / DSM 13 / JCM 2505 / CCUG 7422 / NBRC 12200 / NCIMB 9375 / NCTC 10341 / NRRL NRS-1264 / Gibson 46) protein is Probable guanidinium efflux system subunit GdnC.